Here is a 720-residue protein sequence, read N- to C-terminus: Phosphatase and actin regulator 4 (720 aa).

The tract at residues Met1–Phe48 is disordered. The stretch at Glu74–Pro99 is one RPEL 1 repeat. Disordered stretches follow at residues Ser294–Arg417, Asn454–Ala568, and Arg610–Arg648. Over residues Thr346–Pro368 the composition is skewed to pro residues. Basic and acidic residues predominate over residues Lys393–Ala405. 3 stretches are compositionally biased toward acidic residues: residues Asp481–Gln494, Glu521–Ser534, and Asp542–Glu551. RPEL repeat units lie at residues Thr601 to Asn626 and Arg639 to Glu664. Residues Asn626–Glu636 are compositionally biased toward basic and acidic residues. Positions Ile637–Ser646 are enriched in basic residues.

Belongs to the phosphatase and actin regulator family. Binds PPP1CA and actin.

The protein localises to the cytoplasm. The protein resides in the cell projection. It is found in the lamellipodium. In terms of biological role, regulator of protein phosphatase 1 (PP1) required for neural tube and optic fissure closure, and enteric neural crest cell (ENCCs) migration during development. Acts as an activator of PP1. During neural tube closure, localizes to the ventral neural tube and activates PP1, leading to down-regulate cell proliferation within cranial neural tissue and the neural retina. Also acts as a regulator of migration of enteric neural crest cells (ENCCs) by activating PP1, leading to repression of the integrin signaling through the RHO/ROCK pathway. In Gallus gallus (Chicken), this protein is Phosphatase and actin regulator 4 (PHACTR4).